A 6486-amino-acid polypeptide reads, in one-letter code: Tyrocidine synthase 3 (6486 aa).

Residues 466-1038 form a domain 1 (asparagine-activating) region; sequence IFELIAEQAS…VAELARFLSR (573 aa). 6 consecutive Carrier domains span residues 965–1040, 2002–2077, 3040–3115, 4075–4150, 5119–5194, and 6162–6237; these read APQN…SRSE, APRN…AAAR, APTN…ATSG, AAQN…AESA, APRS…EETA, and APRN…THKR. O-(pantetheine 4'-phosphoryl)serine is present on residues serine 1000, serine 2037, serine 3075, serine 4110, serine 5154, and serine 6197. A domain 2 (glutamine-activating) region spans residues 1521-2070; it reads YEEYALTYRE…FESPTIAGLA (550 aa). A domain 3 (tyrosine-activating) region spans residues 2536 to 3113; the sequence is NKTLQALFEE…IKALAQYVAT (578 aa). The interval 3590 to 4149 is domain 4 (valine-activating); it reads EHAAVVMDGQ…HELAAHIAES (560 aa). The segment at 4606–5203 is domain 5 (ornithine-activating); the sequence is YPTDKTFQKL…AKGNVFSIEP (598 aa). A domain 6 (leucine-activating) region spans residues 5658–6245; that stretch reads LHQLFEEQVD…KRFESRYGTA (588 aa).

The protein belongs to the ATP-dependent AMP-binding enzyme family. Large multienzyme complex of TycA, TycB and TycC. It depends on pantetheine 4'-phosphate as a cofactor.

Its pathway is antibiotic biosynthesis; tyrocidine biosynthesis. In terms of biological role, incorporates six amino acids (for tyrocidine A, Asn, Gln, Tyr, Val, Orn, and Leu) in their L-configuration into the peptide product. In Brevibacillus parabrevis, this protein is Tyrocidine synthase 3 (tycC).